The following is an 894-amino-acid chain: Leucine--tRNA ligase, mitochondrial (894 aa).

A mitochondrion-targeting transit peptide spans 1 to 9 (MLPRPSSRF). Residues 56-66 (PYPSGVLHIGH) carry the 'HIGH' region motif. A 'KMSKS' region motif is present at residues 646 to 650 (KMSKS). Lys649 contacts ATP.

This sequence belongs to the class-I aminoacyl-tRNA synthetase family.

It localises to the mitochondrion matrix. The catalysed reaction is tRNA(Leu) + L-leucine + ATP = L-leucyl-tRNA(Leu) + AMP + diphosphate. The sequence is that of Leucine--tRNA ligase, mitochondrial (NAM2) from Saccharomyces paradoxus (Yeast).